The following is a 130-amino-acid chain: Small ribosomal subunit protein uS11 (130 aa).

The protein belongs to the universal ribosomal protein uS11 family. As to quaternary structure, part of the 30S ribosomal subunit. Interacts with proteins S7 and S18. Binds to IF-3.

Functionally, located on the platform of the 30S subunit, it bridges several disparate RNA helices of the 16S rRNA. Forms part of the Shine-Dalgarno cleft in the 70S ribosome. This is Small ribosomal subunit protein uS11 from Thermotoga maritima (strain ATCC 43589 / DSM 3109 / JCM 10099 / NBRC 100826 / MSB8).